Reading from the N-terminus, the 482-residue chain is UDP-N-acetylmuramate--L-alanine ligase (482 aa).

123 to 129 (GTHGKTT) lines the ATP pocket.

It belongs to the MurCDEF family.

The protein localises to the cytoplasm. It catalyses the reaction UDP-N-acetyl-alpha-D-muramate + L-alanine + ATP = UDP-N-acetyl-alpha-D-muramoyl-L-alanine + ADP + phosphate + H(+). It participates in cell wall biogenesis; peptidoglycan biosynthesis. In terms of biological role, cell wall formation. This is UDP-N-acetylmuramate--L-alanine ligase from Pseudomonas putida (strain ATCC 47054 / DSM 6125 / CFBP 8728 / NCIMB 11950 / KT2440).